The primary structure comprises 637 residues: Threonine--tRNA ligase (637 aa).

Positions methionine 1–threonine 65 constitute a TGS domain. A catalytic region spans residues aspartate 246–proline 537. Cysteine 337, histidine 388, and histidine 514 together coordinate Zn(2+).

The protein belongs to the class-II aminoacyl-tRNA synthetase family. As to quaternary structure, homodimer. It depends on Zn(2+) as a cofactor.

It is found in the cytoplasm. It catalyses the reaction tRNA(Thr) + L-threonine + ATP = L-threonyl-tRNA(Thr) + AMP + diphosphate + H(+). Functionally, catalyzes the attachment of threonine to tRNA(Thr) in a two-step reaction: L-threonine is first activated by ATP to form Thr-AMP and then transferred to the acceptor end of tRNA(Thr). Also edits incorrectly charged L-seryl-tRNA(Thr). This chain is Threonine--tRNA ligase, found in Leptothrix cholodnii (strain ATCC 51168 / LMG 8142 / SP-6) (Leptothrix discophora (strain SP-6)).